Consider the following 267-residue polypeptide: O-methyltransferase (267 aa).

S-adenosyl-L-methionine contacts are provided by Gln-100 and His-145.

It belongs to the methyltransferase superfamily.

It functions in the pathway antifungal biosynthesis. Functionally, O-methyltransferase; part of the gene cluster that mediates the biosynthesis of the tetrahydropyranyl antifungal agent lanomycin that acts as an inhibitor of CYP51 and blocks the ergosterol biosynthesis. The biosynthesis probably begins with the formation of an hexaketide, followed by methionine mediated alkylation of C-2 and C-6, and methylation of the reduced C-3 oxygen, pyran forming reductive ring closure, oxygenation of C-4, beta-keto reduction, enoyl reduction and dehydration of the remaining oxygens, and finally, acylation with glycine to complete the biosynthesis. This chain is O-methyltransferase, found in Pyrenophora dematioidea (Helminthosporium dematioideum).